The following is a 2098-amino-acid chain: Unconventional myosin heavy chain 6 (2098 aa).

The region spanning Gln62–Tyr732 is the Myosin motor domain. Gly155–Thr162 is an ATP binding site. Actin-binding stretches follow at residues Leu609–Glu631 and Gln711–Leu725. IQ domains are found at residues Leu735–Lys757, Gln758–Arg787, and Leu804–Lys833. The interval Phe860 to Pro898 is disordered. In terms of domain architecture, MyTH4 1 spans His929 to Lys1168. The Ras-associating domain occupies Lys1171–Ser1211. Residues Val1173–Ser1481 form the FERM 1 domain. An SH3 domain is found at Lys1479–Thr1547. The region spanning Phe1624–Gln1772 is the MyTH4 2 domain. Positions Ile1778 to Gln2086 constitute an FERM 2 domain.

It belongs to the TRAFAC class myosin-kinesin ATPase superfamily. Myosin family. As to quaternary structure, interacts with unc-98.

The protein localises to the cytoplasm. Myosins are actin-based motor molecules with ATPase activity. Unconventional myosins serve in intracellular movements. Their highly divergent tails are presumed to bind to membranous compartments, which would be moved relative to actin filaments. In Caenorhabditis elegans, this protein is Unconventional myosin heavy chain 6.